Reading from the N-terminus, the 349-residue chain is N-acetyl-gamma-glutamyl-phosphate reductase (349 aa).

Residue Cys149 is part of the active site.

The protein belongs to the NAGSA dehydrogenase family. Type 1 subfamily.

It is found in the cytoplasm. It catalyses the reaction N-acetyl-L-glutamate 5-semialdehyde + phosphate + NADP(+) = N-acetyl-L-glutamyl 5-phosphate + NADPH + H(+). The protein operates within amino-acid biosynthesis; L-arginine biosynthesis; N(2)-acetyl-L-ornithine from L-glutamate: step 3/4. Catalyzes the NADPH-dependent reduction of N-acetyl-5-glutamyl phosphate to yield N-acetyl-L-glutamate 5-semialdehyde. The sequence is that of N-acetyl-gamma-glutamyl-phosphate reductase from Acinetobacter baumannii (strain AB307-0294).